The sequence spans 589 residues: Muscarinic acetylcholine receptor M3 (589 aa).

The Extracellular portion of the chain corresponds to 1 to 66 (MTLHSNSTTS…DPLGGHTIWQ (66 aa)). N-linked (GlcNAc...) asparagine glycosylation is found at Asn6, Asn15, Asn41, Asn48, and Asn52. The helical transmembrane segment at 67 to 90 (VVFIAFLTGFLALVTIIGNILVIV) threads the bilayer. At 91–103 (AFKVNKQLKTVNN) the chain is on the cytoplasmic side. A helical membrane pass occupies residues 104 to 129 (YFLLSLACADLIIGVISMNLFTTYII). Residues 130–141 (MNRWALGNLACD) are Extracellular-facing. Residues Cys140 and Cys220 are joined by a disulfide bond. The chain crosses the membrane as a helical span at residues 142-163 (LWLSIDYVASNASVMNLLVISF). The Cytoplasmic portion of the chain corresponds to 164-183 (DRYFSITRPLTYRAKRTTKR). Residues 184-205 (AGVMIGLAWVISFVLWAPAILF) traverse the membrane as a helical segment. Residues 206-228 (WQYFVGKRTVPPGECFIQFLSEP) are Extracellular-facing. The helical transmembrane segment at 229–251 (TITFGTAIAAFYMPVTIMTILYW) threads the bilayer. Over 252–490 (RIYKETEKRT…SLIKEKKAAQ (239 aa)) the chain is Cytoplasmic. The Basolateral sorting signal signature appears at 274 to 280 (AEAENFV). The disordered stretch occupies residues 323–356 (AEQMDQDHSSSDSWNNNDAAASLENSASSDEEDI). Low complexity predominate over residues 333–344 (SDSWNNNDAAAS). At Ser384 the chain carries Phosphoserine. The helical transmembrane segment at 491-513 (TLSAILLAFIITWTPYNIMVLVN) threads the bilayer. Residues 514–525 (TFCDSCIPKTYW) are Extracellular-facing. A disulfide bridge connects residues Cys516 and Cys519. A helical membrane pass occupies residues 526-545 (NLGYWLCYINSTVNPVCYAL). Topologically, residues 546–589 (CNKTFRTTFKTLLLCQCDKRKRRKQQYQQRQSVIFHKRVPEQAL) are cytoplasmic.

It belongs to the G-protein coupled receptor 1 family. Muscarinic acetylcholine receptor subfamily. CHRM3 sub-subfamily. As to quaternary structure, homodimer; the dimers can form tetramers. Interacts with NALCN. Interacts with TMEM147.

The protein localises to the cell membrane. It localises to the postsynaptic cell membrane. The protein resides in the basolateral cell membrane. Its subcellular location is the endoplasmic reticulum membrane. Functionally, the muscarinic acetylcholine receptor mediates various cellular responses, including inhibition of adenylate cyclase, breakdown of phosphoinositides and modulation of potassium channels through the action of G proteins. Primary transducing effect is Pi turnover. This Rattus norvegicus (Rat) protein is Muscarinic acetylcholine receptor M3 (Chrm3).